Reading from the N-terminus, the 564-residue chain is ATP-dependent RNA helicase DBP3 (564 aa).

The segment at 31-125 is disordered; it reads TKQQTMSKDK…TNYTQSSKLS (95 aa). Basic and acidic residues predominate over residues 58 to 73; that stretch reads ADSKKQRKLEKQEKKD. Residues 74-96 are compositionally biased toward basic residues; sequence KKDKKDKKEKKEKKEKKHKKEKK. Over residues 112–125 the composition is skewed to low complexity; sequence SSSSTNYTQSSKLS. Residues 155–181 carry the Q motif motif; it reads LSFDQVQLTSAITSKLSKFDKPTPIQS. The region spanning 184 to 356 is the Helicase ATP-binding domain; it reads WPFLLSGKDV…NNFMNSPVKV (173 aa). An ATP-binding site is contributed by 197 to 204; sequence AETGSGKT. The DEAD box motif lies at 303-306; sequence DEAD. One can recognise a Helicase C-terminal domain in the interval 385–534; it reads KLIQLLRKYN…PVPEELLKFG (150 aa).

It belongs to the DEAD box helicase family. DDX5/DBP2 subfamily.

Its subcellular location is the nucleus. The protein localises to the nucleolus. The enzyme catalyses ATP + H2O = ADP + phosphate + H(+). ATP-dependent RNA helicase required for 60S ribosomal subunit synthesis. Involved in efficient pre-rRNA processing, predominantly at site A3, which is necessary for the normal formation of 25S and 5.8S rRNAs. This Candida albicans (strain SC5314 / ATCC MYA-2876) (Yeast) protein is ATP-dependent RNA helicase DBP3 (DBP3).